A 529-amino-acid chain; its full sequence is Peptide chain release factor 3 (529 aa).

One can recognise a tr-type G domain in the interval 11-280; it reads AKRRTFAIIS…GLIEWAPQPM (270 aa). GTP is bound by residues 20 to 27, 88 to 92, and 142 to 145; these read SHPDAGKT, DTPGH, and NKLD.

It belongs to the TRAFAC class translation factor GTPase superfamily. Classic translation factor GTPase family. PrfC subfamily.

Its subcellular location is the cytoplasm. Increases the formation of ribosomal termination complexes and stimulates activities of RF-1 and RF-2. It binds guanine nucleotides and has strong preference for UGA stop codons. It may interact directly with the ribosome. The stimulation of RF-1 and RF-2 is significantly reduced by GTP and GDP, but not by GMP. This Enterobacter sp. (strain 638) protein is Peptide chain release factor 3.